The sequence spans 363 residues: MIIDTTEVQDLNSFSRLESLKEVYGIIGMFLPILTLVLGITIGVLVIVWLEREISAGIQQRIGPEYAGPLGILQALADGTKLIFKENLFPSRGDTRLFSIGPSIAVISILLSYSVIPFSYHLVLSDLNIGVFLWIAISSIAPIGLLMSGYGSNNKYSFLSGLRAAAQSISYEIPLTLLCVINISLSNSSSTVDIVEAQSKYGFWGWNLWRQPIGFFIFLISSLAECERLPFDLPEAEEELVAGYQTEYSGIKFGLFYVASYLNLLVSSLFVTVLYLGGWNISIPYIFVPELFEINKVGRVFGTTIGIFITLAKTYFFLFISITTRWTLPRLRIDQLLNLGWKFLLPISLGNLLLTTSFQLLSL.

A run of 6 helical transmembrane segments spans residues Phe-30–Leu-50, Ile-104–Leu-124, Ile-129–Gly-149, Tyr-248–Ser-268, Val-300–Ile-320, and Phe-343–Leu-363.

It belongs to the complex I subunit 1 family. As to quaternary structure, NDH is composed of at least 16 different subunits, 5 of which are encoded in the nucleus.

The protein localises to the plastid. It is found in the chloroplast thylakoid membrane. It catalyses the reaction a plastoquinone + NADH + (n+1) H(+)(in) = a plastoquinol + NAD(+) + n H(+)(out). The enzyme catalyses a plastoquinone + NADPH + (n+1) H(+)(in) = a plastoquinol + NADP(+) + n H(+)(out). Functionally, NDH shuttles electrons from NAD(P)H:plastoquinone, via FMN and iron-sulfur (Fe-S) centers, to quinones in the photosynthetic chain and possibly in a chloroplast respiratory chain. The immediate electron acceptor for the enzyme in this species is believed to be plastoquinone. Couples the redox reaction to proton translocation, and thus conserves the redox energy in a proton gradient. This chain is NAD(P)H-quinone oxidoreductase subunit 1, chloroplastic, found in Eucalyptus globulus subsp. globulus (Tasmanian blue gum).